The primary structure comprises 203 residues: ATP-dependent dethiobiotin synthetase BioD (203 aa).

11-16 serves as a coordination point for ATP; sequence NVGKTI. Thr15 is a binding site for Mg(2+). The active site involves Lys31. Thr35 is a binding site for substrate. ATP is bound by residues Asp42 and 94–97; that span reads EGAG. Mg(2+)-binding residues include Asp42 and Glu94.

Belongs to the dethiobiotin synthetase family. As to quaternary structure, homodimer. The cofactor is Mg(2+).

It is found in the cytoplasm. The catalysed reaction is (7R,8S)-7,8-diammoniononanoate + CO2 + ATP = (4R,5S)-dethiobiotin + ADP + phosphate + 3 H(+). It participates in cofactor biosynthesis; biotin biosynthesis; biotin from 7,8-diaminononanoate: step 1/2. Functionally, catalyzes a mechanistically unusual reaction, the ATP-dependent insertion of CO2 between the N7 and N8 nitrogen atoms of 7,8-diaminopelargonic acid (DAPA, also called 7,8-diammoniononanoate) to form a ureido ring. This Lawsonia intracellularis (strain PHE/MN1-00) protein is ATP-dependent dethiobiotin synthetase BioD.